A 299-amino-acid polypeptide reads, in one-letter code: CRISPR system Cms protein Csm4 (299 aa).

This sequence belongs to the CRISPR-associated Csm4 family. Part of the Csm effector complex that includes at least Cas10(1), Csm2(3), Csm3(5), Csm4(1), Csm5(1) and mature crRNA. The Csm complex is elongated and slightly twisted with a maximal length of 215 Angstroms and a diameter of 75-80 Angstroms. It has been modeled to have a central protein filamant of Csm3 subunits along which the dsRNA helix of paired crRNA and target RNA binds. The filament is capped at one end by Cas10 and Csm4 and at the other end by Csm5; ssDNA is thought to bind to the N-terminal HD domain of Cas10. Csm with a precursor crRNA does not include Csm5, while Cas6, the enzyme probably involved in pre-crRNA processing, is found associated with a subset of the Csm complex.

CRISPR (clustered regularly interspaced short palindromic repeat) is an adaptive immune system that provides protection against mobile genetic elements (viruses, transposable elements and conjugative plasmids). CRISPR clusters contain spacers, sequences complementary to antecedent mobile elements, and target invading nucleic acids. CRISPR clusters are transcribed and processed into CRISPR RNA (crRNA). The type III-A Csm effector complex binds crRNA and acts as a crRNA-guided RNase, DNase and cyclic oligoadenylate synthase; binding of target RNA cognate to the crRNA is required for all activities. In a heterologous host this Csm effector complex restricts ssRNA phage MS2, suggesting it may target RNA viruses in vivo. Its function is as follows. Csm functions as a non-specific ssDNase. Base-pairing between crRNA and target RNA to form a ternary Csm complex activates a ssDNase activity; target RNA cleavage suppresses the ssDNase, a temporal control that prevents uncontrolled DNA degradation. Viral RNA transcripts probably tether the Csm complex to the viral genome, recruiting Cas10 ssDNA activity which is able to degrade DNA in the transcription bubble, spatially controlling the DNase activity. In terms of biological role, the subunit probably binds to the 5' handle of the crRNA, helping in discrimination between self- and non-self. This is CRISPR system Cms protein Csm4 from Streptococcus thermophilus.